The chain runs to 149 residues: Transcriptional regulator MraZ (149 aa).

2 SpoVT-AbrB domains span residues 6–52 (RSYR…TPED) and 81–124 (VEEL…SEEE).

The protein belongs to the MraZ family. In terms of assembly, forms oligomers.

The protein localises to the cytoplasm. It localises to the nucleoid. This chain is Transcriptional regulator MraZ, found in Oleidesulfovibrio alaskensis (strain ATCC BAA-1058 / DSM 17464 / G20) (Desulfovibrio alaskensis).